Consider the following 315-residue polypeptide: Tyrosine recombinase XerC (315 aa).

The region spanning 1–103 is the Core-binding (CB) domain; it reads MIASFYAFLD…AIKSFAKFCV (103 aa). In terms of domain architecture, Tyr recombinase spans 124–306; the sequence is ELPSPLTYEQ…SMKLKKQIHD (183 aa). Active-site residues include Arg-164, Lys-188, His-258, Arg-261, and His-284. The active-site O-(3'-phospho-DNA)-tyrosine intermediate is Tyr-293.

Belongs to the 'phage' integrase family. XerC subfamily. As to quaternary structure, forms a cyclic heterotetrameric complex composed of two molecules of XerC and two molecules of XerD.

It is found in the cytoplasm. Its function is as follows. Site-specific tyrosine recombinase, which acts by catalyzing the cutting and rejoining of the recombining DNA molecules. The XerC-XerD complex is essential to convert dimers of the bacterial chromosome into monomers to permit their segregation at cell division. It also contributes to the segregational stability of plasmids. This Chlamydia muridarum (strain MoPn / Nigg) protein is Tyrosine recombinase XerC.